A 136-amino-acid polypeptide reads, in one-letter code: uncharacterized protein (136 aa).

It to E.coli YcgX and YdfO.

This is an uncharacterized protein from Escherichia coli (strain K12).